A 173-amino-acid chain; its full sequence is Peptide methionine sulfoxide reductase MsrA (173 aa).

Residue Cys-10 is part of the active site.

It belongs to the MsrA Met sulfoxide reductase family.

It carries out the reaction L-methionyl-[protein] + [thioredoxin]-disulfide + H2O = L-methionyl-(S)-S-oxide-[protein] + [thioredoxin]-dithiol. The catalysed reaction is [thioredoxin]-disulfide + L-methionine + H2O = L-methionine (S)-S-oxide + [thioredoxin]-dithiol. In terms of biological role, has an important function as a repair enzyme for proteins that have been inactivated by oxidation. Catalyzes the reversible oxidation-reduction of methionine sulfoxide in proteins to methionine. The polypeptide is Peptide methionine sulfoxide reductase MsrA (Psychrobacter arcticus (strain DSM 17307 / VKM B-2377 / 273-4)).